Consider the following 343-residue polypeptide: Probable transposase for insertion sequence element (343 aa).

This sequence belongs to the transposase mutator family.

Its function is as follows. Required for the transposition of the insertion element. The sequence is that of Probable transposase for insertion sequence element from Corynebacterium diphtheriae.